Reading from the N-terminus, the 464-residue chain is Cystathionine beta-lyase, chloroplastic (464 aa).

The transit peptide at 1–55 directs the protein to the chloroplast; the sequence is MTSSLSLHSSFVPSFADLSDRGLISKNSPTSVSISKVPTWEKKQISNRNSFKLNC. Residues Y127, R129, G157, M158, S275, and T277 each coordinate pyridoxal 5'-phosphate. An N6-(pyridoxal phosphate)lysine modification is found at K278.

Belongs to the trans-sulfuration enzymes family. In terms of assembly, forms homodimers. May form homotetramers from two homodimers. It depends on pyridoxal 5'-phosphate as a cofactor.

The protein localises to the plastid. It localises to the chloroplast. The catalysed reaction is L,L-cystathionine + H2O = L-homocysteine + pyruvate + NH4(+). The enzyme catalyses an S-substituted L-cysteine + H2O = a thiol + pyruvate + NH4(+). It participates in amino-acid biosynthesis; L-methionine biosynthesis via de novo pathway; L-homocysteine from L-cystathionine: step 1/1. In terms of biological role, catalyzes the penultimate step in the de novo biosynthesis of methionine. Its role in methionine metabolism may affect plant development in different organs, probably by modifying plant auxin transport. Its cysteine desulfhydrase activity may be involved in hydrogen sulfur production using L-cysteine as a substrate. The protein is Cystathionine beta-lyase, chloroplastic of Arabidopsis thaliana (Mouse-ear cress).